An 88-amino-acid polypeptide reads, in one-letter code: Thioredoxin-2 (88 aa).

Positions 2–88 constitute a Thioredoxin domain; the sequence is SRVIHISSNE…YRNGAKVSEF (87 aa). Residues Cys-31 and Cys-34 each act as nucleophile in the active site. A disulfide bridge connects residues Cys-31 and Cys-34.

This sequence belongs to the thioredoxin family.

Its function is as follows. Participates in various redox reactions through the reversible oxidation of its active center dithiol to a disulfide and catalyzes dithiol-disulfide exchange reactions. This chain is Thioredoxin-2 (trxB), found in Dictyostelium discoideum (Social amoeba).